The chain runs to 160 residues: Dihydrofolate reductase (160 aa).

In terms of domain architecture, DHFR spans 2 to 159; sequence TFSLIVATTL…YDCRFLILTR (158 aa). Isoleucine 6 contributes to the substrate binding site. NADP(+) contacts are provided by residues alanine 8 and 14-20; that span reads VIGKDNQ. Aspartate 28 contributes to the substrate binding site. Position 46 to 47 (46 to 47) interacts with NADP(+); sequence KT. Substrate contacts are provided by arginine 53 and arginine 58. NADP(+) contacts are provided by residues 64-65 and 96-103; these read SR and GGGELFKQ. Threonine 114 is a binding site for substrate.

This sequence belongs to the dihydrofolate reductase family.

The catalysed reaction is (6S)-5,6,7,8-tetrahydrofolate + NADP(+) = 7,8-dihydrofolate + NADPH + H(+). It functions in the pathway cofactor biosynthesis; tetrahydrofolate biosynthesis; 5,6,7,8-tetrahydrofolate from 7,8-dihydrofolate: step 1/1. Functionally, key enzyme in folate metabolism. Catalyzes an essential reaction for de novo glycine and purine synthesis, and for DNA precursor synthesis. In Haemophilus influenzae (strain ATCC 51907 / DSM 11121 / KW20 / Rd), this protein is Dihydrofolate reductase (folA).